The following is a 931-amino-acid chain: Protein translocase subunit SecA (931 aa).

ATP-binding positions include Q87, 105 to 109, and D515; that span reads GEGKT. Residues C915, C917, C926, and H927 each coordinate Zn(2+).

It belongs to the SecA family. Monomer and homodimer. Part of the essential Sec protein translocation apparatus which comprises SecA, SecYEG and auxiliary proteins SecDF-YajC and YidC. Requires Zn(2+) as cofactor.

The protein resides in the cell inner membrane. Its subcellular location is the cytoplasm. The enzyme catalyses ATP + H2O + cellular proteinSide 1 = ADP + phosphate + cellular proteinSide 2.. Its function is as follows. Part of the Sec protein translocase complex. Interacts with the SecYEG preprotein conducting channel. Has a central role in coupling the hydrolysis of ATP to the transfer of proteins into and across the cell membrane, serving both as a receptor for the preprotein-SecB complex and as an ATP-driven molecular motor driving the stepwise translocation of polypeptide chains across the membrane. This is Protein translocase subunit SecA from Burkholderia pseudomallei (strain K96243).